The primary structure comprises 387 residues: GTPase Obg (387 aa).

The region spanning 1–159 (MKFVDEAVIR…RSLRLELMLL (159 aa)) is the Obg domain. Positions 160–333 (ADVGLLGMPN…LALKLMDFID (174 aa)) constitute an OBG-type G domain. GTP is bound by residues 166–173 (GMPNAGKS), 191–195 (FTTLV), 213–216 (DIPG), 283–286 (NKTD), and 314–316 (SAY). Mg(2+) is bound by residues serine 173 and threonine 193.

It belongs to the TRAFAC class OBG-HflX-like GTPase superfamily. OBG GTPase family. As to quaternary structure, monomer. Mg(2+) serves as cofactor.

The protein resides in the cytoplasm. An essential GTPase which binds GTP, GDP and possibly (p)ppGpp with moderate affinity, with high nucleotide exchange rates and a fairly low GTP hydrolysis rate. Plays a role in control of the cell cycle, stress response, ribosome biogenesis and in those bacteria that undergo differentiation, in morphogenesis control. The protein is GTPase Obg of Shewanella loihica (strain ATCC BAA-1088 / PV-4).